Consider the following 310-residue polypeptide: Adenylyl-sulfate kinase 4, chloroplastic (310 aa).

The N-terminal 75 residues, 1-75, are a transit peptide targeting the chloroplast; sequence MDVAAMARCV…MAKDESISSR (75 aa). Position 116–124 (116–124) interacts with ATP; it reads GLSGSGKSS. Substrate contacts are provided by residues Asp-146, Arg-149, Arg-163, Asn-166, 189 to 190, and Gly-239; that span reads IS. Ser-190 serves as the catalytic Phosphoserine intermediate.

Belongs to the APS kinase family. As to quaternary structure, homodimer; disulfide-linked. As to expression, expressed in root vasculature, root tips, leaf epidermal and guard cells, pollen grains and radicle of immature seeds.

The protein localises to the plastid. The protein resides in the chloroplast. The enzyme catalyses adenosine 5'-phosphosulfate + ATP = 3'-phosphoadenylyl sulfate + ADP + H(+). The protein operates within sulfur metabolism; hydrogen sulfide biosynthesis; sulfite from sulfate: step 2/3. In terms of biological role, catalyzes the phosphorylation of adenosine 5'-phosphosulfate to 3'-phosphoadenylyl sulfate, which is the activated sulfate form for sulfation reactions. Essential for plant reproduction and viability. This chain is Adenylyl-sulfate kinase 4, chloroplastic (APK4), found in Arabidopsis thaliana (Mouse-ear cress).